The sequence spans 284 residues: Pantothenate synthetase (284 aa).

An ATP-binding site is contributed by 30 to 37; sequence MGNLHDGH. The active-site Proton donor is the His37. Residue Gln61 coordinates (R)-pantoate. A beta-alanine-binding site is contributed by Gln61. Position 149 to 152 (149 to 152) interacts with ATP; that stretch reads GEKD. Residue Gln155 coordinates (R)-pantoate. ATP is bound by residues Val178 and 186 to 189; that span reads LSSR.

The protein belongs to the pantothenate synthetase family. In terms of assembly, homodimer.

Its subcellular location is the cytoplasm. The catalysed reaction is (R)-pantoate + beta-alanine + ATP = (R)-pantothenate + AMP + diphosphate + H(+). The protein operates within cofactor biosynthesis; (R)-pantothenate biosynthesis; (R)-pantothenate from (R)-pantoate and beta-alanine: step 1/1. Functionally, catalyzes the condensation of pantoate with beta-alanine in an ATP-dependent reaction via a pantoyl-adenylate intermediate. This is Pantothenate synthetase from Klebsiella pneumoniae (strain 342).